The following is a 309-amino-acid chain: Zinc finger protein-like 1 homolog (309 aa).

The segment at 1-43 adopts a B box-type; degenerate zinc-finger fold; sequence MGLCKCPKRKVTNLFCYEHRVNVCEFCLVDNHPNCVVQSYLTW. The RING-type; atypical zinc finger occupies 53 to 101; it reads CSLCKTTLAEGDTIRLNCLHLLHWKCFDEWAANFPATTAPAGYRCPCCS. Residues 200–221 are disordered; it reads GAESSSDTRPLLQLRDADNEEN. The chain crosses the membrane as a helical span at residues 254 to 274; it reads KIALFVIFLAVLALITIIMVM.

It belongs to the ZFPL1 family.

It localises to the membrane. This Caenorhabditis elegans protein is Zinc finger protein-like 1 homolog.